The sequence spans 235 residues: N,O-diacetylmuramidase (235 aa).

A signal peptide spans 1–17 (MKLSLLTVAAAAGAAVA). One can recognise a Ch-type lysozyme domain in the interval 29 to 235 (SVQGFDISGY…DQLQRFAKGG (207 aa)). Residues D34, D122, and E124 contribute to the active site. An intrachain disulfide couples C132 to C171.

It belongs to the glycosyl hydrolase 25 family.

It localises to the secreted. The catalysed reaction is Hydrolysis of (1-&gt;4)-beta-linkages between N-acetylmuramic acid and N-acetyl-D-glucosamine residues in a peptidoglycan and between N-acetyl-D-glucosamine residues in chitodextrins.. Functionally, this enzyme has both lysozyme (acetylmuramidase) and diacetylmuramidase activities. The polypeptide is N,O-diacetylmuramidase (Arthroderma benhamiae (strain ATCC MYA-4681 / CBS 112371) (Trichophyton mentagrophytes)).